The chain runs to 66 residues: Period circadian protein (66 aa).

Positions 1 to 66 (EGSGGSGSSG…VTLTESLLNK (66 aa)) are disordered. Low complexity predominate over residues 9-31 (SGNFTTGSNIHMSSVTNTSNAGT). 4 tandem repeats follow at residues 30-31 (GT), 32-33 (GT), 35-36 (GT), and 37-38 (GN). The interval 30–53 (GTGTSGTGNSGGGSGGGTGPGSGA) is 4 X 2 AA tandem repeats of G-[TN]. Positions 32–51 (GTSGTGNSGGGSGGGTGPGS) are enriched in gly residues.

Forms a heterodimer with timeless (TIM); the complex then translocates into the nucleus. In terms of processing, phosphorylated with a circadian rhythmicity, probably by the double-time protein (dbt). Phosphorylation could be implicated in the stability of per monomer and in the formation of heterodimer per-tim.

It is found in the nucleus. Its subcellular location is the cytoplasm. The protein localises to the perinuclear region. Functionally, essential for biological clock functions. Determines the period length of circadian and ultradian rhythms; an increase in PER dosage leads to shortened circadian rhythms and a decrease leads to lengthened circadian rhythms. Essential for the circadian rhythmicity of locomotor activity, eclosion behavior, and for the rhythmic component of the male courtship song that originates in the thoracic nervous system. The biological cycle depends on the rhythmic formation and nuclear localization of the TIM-PER complex. Light induces the degradation of TIM, which promotes elimination of PER. Nuclear activity of the heterodimer coordinatively regulates PER and TIM transcription through a negative feedback loop. Behaves as a negative element in circadian transcriptional loop. Does not appear to bind DNA, suggesting indirect transcriptional inhibition. The polypeptide is Period circadian protein (per) (Drosophila saltans (Fruit fly)).